We begin with the raw amino-acid sequence, 672 residues long: Acetoacetyl-CoA synthetase (672 aa).

Belongs to the ATP-dependent AMP-binding enzyme family.

The protein localises to the cytoplasm. Its subcellular location is the cytosol. The catalysed reaction is acetoacetate + ATP + CoA = acetoacetyl-CoA + AMP + diphosphate. In terms of biological role, activates acetoacetate to acetoacetyl-CoA. This Xenopus tropicalis (Western clawed frog) protein is Acetoacetyl-CoA synthetase (aacs).